A 315-amino-acid polypeptide reads, in one-letter code: Methionyl-tRNA formyltransferase (315 aa).

113–116 contributes to the (6S)-5,6,7,8-tetrahydrofolate binding site; the sequence is SLLP.

This sequence belongs to the Fmt family.

The enzyme catalyses L-methionyl-tRNA(fMet) + (6R)-10-formyltetrahydrofolate = N-formyl-L-methionyl-tRNA(fMet) + (6S)-5,6,7,8-tetrahydrofolate + H(+). Its function is as follows. Attaches a formyl group to the free amino group of methionyl-tRNA(fMet). The formyl group appears to play a dual role in the initiator identity of N-formylmethionyl-tRNA by promoting its recognition by IF2 and preventing the misappropriation of this tRNA by the elongation apparatus. The polypeptide is Methionyl-tRNA formyltransferase (Escherichia coli O127:H6 (strain E2348/69 / EPEC)).